Consider the following 1057-residue polypeptide: Carbamoyl phosphate synthase large chain (1057 aa).

The interval 1–401 (MPKREDINKI…ATQKAIRSLD (401 aa)) is carboxyphosphate synthetic domain. ATP-binding residues include arginine 129, arginine 169, glycine 175, glycine 176, glutamine 208, isoleucine 210, glutamate 215, glycine 241, isoleucine 242, histidine 243, glutamine 284, and glutamate 298. The 195-residue stretch at 133-327 (RALMNDLNEP…IAKVAAKIAV (195 aa)) folds into the ATP-grasp 1 domain. Positions 284, 298, and 300 each coordinate Mg(2+). Positions 284, 298, and 300 each coordinate Mn(2+). An oligomerization domain region spans residues 402 to 546 (IDINYIGDEE…YSTYELENES (145 aa)). Residues 547-929 (IVSNRKSIVV…ALYKAFEGAK (383 aa)) form a carbamoyl phosphate synthetic domain region. Residues 671–861 (NKLIQANGIR…MARLATRAIL (191 aa)) form the ATP-grasp 2 domain. ATP-binding residues include arginine 707, glutamine 746, leucine 748, glutamate 752, glycine 777, valine 778, histidine 779, serine 780, glutamine 820, and glutamate 832. Residues glutamine 820, glutamate 832, and asparagine 834 each contribute to the Mg(2+) site. Glutamine 820, glutamate 832, and asparagine 834 together coordinate Mn(2+). The MGS-like domain occupies 930–1057 (MHMPDHGKVL…ESQAFTTLHL (128 aa)). Residues 930–1057 (MHMPDHGKVL…ESQAFTTLHL (128 aa)) are allosteric domain.

This sequence belongs to the CarB family. In terms of assembly, composed of two chains; the small (or glutamine) chain promotes the hydrolysis of glutamine to ammonia, which is used by the large (or ammonia) chain to synthesize carbamoyl phosphate. Tetramer of heterodimers (alpha,beta)4. Requires Mg(2+) as cofactor. The cofactor is Mn(2+).

It carries out the reaction hydrogencarbonate + L-glutamine + 2 ATP + H2O = carbamoyl phosphate + L-glutamate + 2 ADP + phosphate + 2 H(+). The catalysed reaction is hydrogencarbonate + NH4(+) + 2 ATP = carbamoyl phosphate + 2 ADP + phosphate + 2 H(+). It functions in the pathway amino-acid biosynthesis; L-arginine biosynthesis; carbamoyl phosphate from bicarbonate: step 1/1. Its pathway is pyrimidine metabolism; UMP biosynthesis via de novo pathway; (S)-dihydroorotate from bicarbonate: step 1/3. Its function is as follows. Large subunit of the glutamine-dependent carbamoyl phosphate synthetase (CPSase). CPSase catalyzes the formation of carbamoyl phosphate from the ammonia moiety of glutamine, carbonate, and phosphate donated by ATP, constituting the first step of 2 biosynthetic pathways, one leading to arginine and/or urea and the other to pyrimidine nucleotides. The large subunit (synthetase) binds the substrates ammonia (free or transferred from glutamine from the small subunit), hydrogencarbonate and ATP and carries out an ATP-coupled ligase reaction, activating hydrogencarbonate by forming carboxy phosphate which reacts with ammonia to form carbamoyl phosphate. In Pediococcus pentosaceus (strain ATCC 25745 / CCUG 21536 / LMG 10740 / 183-1w), this protein is Carbamoyl phosphate synthase large chain.